A 143-amino-acid chain; its full sequence is MAKKIIGFIKLQIPAGKANPSPPVGPALGQRGLNIMEFCKAFNAQTQGMEPGLPVPVVITAFADKSFTFVMKSPPATVLIKKAAGVQKGSAKPHTDKVGKITRAQAEEIAKAKNADLTAADLDAAVRTIAGSARSMGITVEGL.

Belongs to the universal ribosomal protein uL11 family. In terms of assembly, part of the ribosomal stalk of the 50S ribosomal subunit. Interacts with L10 and the large rRNA to form the base of the stalk. L10 forms an elongated spine to which L12 dimers bind in a sequential fashion forming a multimeric L10(L12)X complex. One or more lysine residues are methylated.

In terms of biological role, forms part of the ribosomal stalk which helps the ribosome interact with GTP-bound translation factors. The polypeptide is Large ribosomal subunit protein uL11 (Ralstonia nicotianae (strain ATCC BAA-1114 / GMI1000) (Ralstonia solanacearum)).